Consider the following 213-residue polypeptide: V-type ATP synthase subunit D (213 aa).

Belongs to the V-ATPase D subunit family.

Its function is as follows. Produces ATP from ADP in the presence of a proton gradient across the membrane. The sequence is that of V-type ATP synthase subunit D from Clostridium botulinum (strain Alaska E43 / Type E3).